The chain runs to 564 residues: Proline--tRNA ligase (564 aa).

This sequence belongs to the class-II aminoacyl-tRNA synthetase family. ProS type 1 subfamily. Homodimer.

Its subcellular location is the cytoplasm. The enzyme catalyses tRNA(Pro) + L-proline + ATP = L-prolyl-tRNA(Pro) + AMP + diphosphate. Functionally, catalyzes the attachment of proline to tRNA(Pro) in a two-step reaction: proline is first activated by ATP to form Pro-AMP and then transferred to the acceptor end of tRNA(Pro). As ProRS can inadvertently accommodate and process non-cognate amino acids such as alanine and cysteine, to avoid such errors it has two additional distinct editing activities against alanine. One activity is designated as 'pretransfer' editing and involves the tRNA(Pro)-independent hydrolysis of activated Ala-AMP. The other activity is designated 'posttransfer' editing and involves deacylation of mischarged Ala-tRNA(Pro). The misacylated Cys-tRNA(Pro) is not edited by ProRS. This chain is Proline--tRNA ligase, found in Thermosipho melanesiensis (strain DSM 12029 / CIP 104789 / BI429).